Reading from the N-terminus, the 932-residue chain is AP-3 complex subunit delta (932 aa).

N-acetylthreonine is present on Thr2. 12 HEAT repeats span residues 157 to 194 (SLAR…QYPE), 196 to 231 (LRDN…KNPQ), 233 to 269 (FIQL…VEPK), 270 to 307 (LRAK…LEED), 310 to 346 (ETAM…KINT), 347 to 384 (DFIS…EDNL), 386 to 425 (AIVQ…ENYK), 427 to 466 (KMVN…DISD), 490 to 527 (VTIA…TLVE), 528 to 564 (NGND…NWCN), 570 to 601 (KRFE…ERSV), and 602 to 638 (EVLE…AYEL). Phosphoserine is present on residues Ser700 and Ser727. Residues 720–868 (EREKERMSNP…EEGNLRKEDE (149 aa)) are disordered. Composition is skewed to basic and acidic residues over residues 738–747 (ERTKNSKDLL) and 755–766 (SDKKPETIRLNR). Thr767 carries the post-translational modification Phosphothreonine. Low complexity predominate over residues 767–779 (TDNSLNSLSLSTT). Ser770 and Ser773 each carry phosphoserine. Positions 783-793 (RKKKKGKKKNR) are enriched in basic residues. Ser798 is modified (phosphoserine). Residues 806-832 (APKRKDAFQKPHDNHSTQNPLKKDKIN) are compositionally biased toward basic and acidic residues. Residues 838–855 (QLENFDFSNFGQSSNAGR) are compositionally biased toward polar residues. The span at 857 to 868 (SQEEGNLRKEDE) shows a compositional bias: basic and acidic residues. Residues 858–878 (QEEGNLRKEDELELSRLEANL) adopt a coiled-coil conformation. Position 888 is a phosphoserine (Ser888). Residues 897–915 (KKKKKGKKSKSKNKLKTKA) show a composition bias toward basic residues. A disordered region spans residues 897-932 (KKKKKGKKSKSKNKLKTKAKNSPEPNEFLRDQSTDI). The residue at position 918 (Ser918) is a Phosphoserine. A compositionally biased stretch (basic and acidic residues) spans 923-932 (EFLRDQSTDI).

This sequence belongs to the adaptor complexes large subunit family. As to quaternary structure, adaptor protein complex 3 (AP-3) is a heterotetramer composed of 2 large adaptins (APL5 and APL6), a medium adaptin (APM3) and a small adaptin (APS3). Interacts with VPS41.

It is found in the golgi apparatus. The protein localises to the cytoplasmic vesicle. It localises to the clathrin-coated vesicle membrane. Part of the AP-3 complex, an adaptor-related complex which is not clathrin-associated. The complex is associated with the Golgi region as well as more peripheral structures. It facilitates the budding of vesicles from the Golgi membrane and may be directly involved in trafficking to the vacuole. Required for the transport via the ALP pathway, which directs the transport of the cargo proteins PHO8 and VAM3 to the vacuole. This Saccharomyces cerevisiae (strain ATCC 204508 / S288c) (Baker's yeast) protein is AP-3 complex subunit delta (APL5).